Reading from the N-terminus, the 173-residue chain is Regulatory protein RecX (173 aa).

Belongs to the RecX family.

The protein resides in the cytoplasm. Functionally, modulates RecA activity. This chain is Regulatory protein RecX, found in Mycobacterium avium (strain 104).